Reading from the N-terminus, the 89-residue chain is Large ribosomal subunit protein bL27 (89 aa).

This sequence belongs to the bacterial ribosomal protein bL27 family.

In Afipia carboxidovorans (strain ATCC 49405 / DSM 1227 / KCTC 32145 / OM5) (Oligotropha carboxidovorans), this protein is Large ribosomal subunit protein bL27.